Reading from the N-terminus, the 148-residue chain is CASP-like protein 1 (148 aa).

Helical transmembrane passes span 31–51, 74–94, and 121–141; these read FIYFVAAFSVAGLYSIITSLL, VLLLGIVAAAIGAAGGVGYIG, and IAAGLIASIVLVLLILLSFFT.

Belongs to the Casparian strip membrane proteins (CASP) family. As to quaternary structure, homodimer and heterodimers.

It is found in the cell membrane. The sequence is that of CASP-like protein 1 from Panax ginseng (Korean ginseng).